The following is a 641-amino-acid chain: EKIKICLQKQVNSSFSLHNGFGGNLYATEEKRMFELVKPKAGASVLNQSTWIGFGDSRTDKSNPNFPRSADVSVKTANKFRSLTGGSLMLSMFGPPGKVDYLYQGCGKHKVFYEGVNWSPHAAIDCYRKNWTDIKLNFQKNIYELASQSHCMSLVNALDKTIPLQATAGVAGNCNNSFLKNPALYTQEVTPPXXKCGKENLAFFTLPTQFGTYECRLHLVASCYFIYDSKEVYNKRGCDNYFQVIYDSSGKVVGGLDNRVSPYTGNSGDTPTMQCDMIQLKPGRYSVRSSPRFLLMPERSYCFDMKEKGPVTAVQSIWGKDRKSDYAVDQACLSTPGCMLIQKQKPYTGEADDHHGDQEMRELLSGLDYEARCISQSGWVNETSPFTEEYLLPPKFGRCPLAAKEESIPKIPDGLLIPTSGTDTTVTKPKSRIFGIDDLIIGLLFVAIVEAGIGGYLLGSRKESGGGVTKESAEKGFEKIGNDIQILRSSTNIAIEKLNDRISHDEQAIRDLTLEIENARSEALLGELGIIRALLVGNISIGLQESLWELASEITNRAGDLAVEISPGCWIIDNNICDQSCQNFIFKFNETAPVPTIPPLDTKIDLQSDPFYWGSSLGLAITAAISLAALVISGIAICRTK.

A fusion domain-1 region spans residues 1–26 (EKIKICLQKQVNSSFSLHNGFGGNLY). Residues 1-616 (EKIKICLQKQ…QSDPFYWGSS (616 aa)) lie on the Extracellular side of the membrane. 7 disulfides stabilise this stretch: Cys-6–Cys-569, Cys-106–Cys-151, Cys-126–Cys-174, Cys-196–Cys-238, Cys-215–Cys-302, Cys-223–Cys-275, and Cys-332–Cys-338. 2 N-linked (GlcNAc...) asparagine; by host glycosylation sites follow: Asn-12 and Asn-47. Positions 27–137 (ATEEKRMFEL…RKNWTDIKLN (111 aa)) are esterase domain-1. The active-site Nucleophile is the Ser-57. Asn-130 carries N-linked (GlcNAc...) asparagine; by host glycosylation. An N-acetyl-9-O-acetylneuraminic acid binding region spans residues 137–296 (NFQKNIYELA…VRSSPRFLLM (160 aa)). The segment at 297-351 (PERSYCFDMKEKGPVTAVQSIWGKDRKSDYAVDQACLSTPGCMLIQKQKPYTGEA) is esterase domain-2. Active-site charge relay system residues include Asp-352 and His-355. The segment at 352 to 637 (DDHHGDQEMR…AALVISGIAI (286 aa)) is fusion domain-2. N-linked (GlcNAc...) asparagine; by host glycosylation occurs at Asn-381. A helical membrane pass occupies residues 617-637 (LGLAITAAISLAALVISGIAI). Topologically, residues 638–641 (CRTK) are cytoplasmic.

Belongs to the influenza type C/coronaviruses hemagglutinin-esterase family. Homotrimer of disulfide-linked HEF1-HEF2. In terms of processing, in natural infection, inactive HEF is matured into HEF1 and HEF2 outside the cell by one or more trypsin-like, arginine-specific endoprotease.

The protein resides in the virion membrane. The protein localises to the host cell membrane. The catalysed reaction is N-acetyl-9-O-acetylneuraminate + H2O = N-acetylneuraminate + acetate + H(+). It catalyses the reaction N-acetyl-4-O-acetylneuraminate + H2O = N-acetylneuraminate + acetate + H(+). Its function is as follows. Binds to the N-acetyl-9-O-acetylneuraminic acid residues on the cell surface, bringing about the attachment of the virus particle to the cell. Plays a major role in the determination of host range restriction and virulence. Class I viral fusion protein. Responsible for penetration of the virus into the cell cytoplasm by mediating the fusion of the membrane of the endocytosed virus particle with the endosomal membrane. Low pH in endosomes induce an irreversible conformational change in HEF2, releasing the fusion hydrophobic peptide. Several trimers are required to form a competent fusion pore. Displays a receptor-destroying activity which is a neuraminidate-O-acetyl esterase. This activity cleaves off any receptor on the cell surface, which would otherwise prevent virions release. These cleavages prevent self-aggregation and ensure the efficient spread of the progeny virus from cell to cell. This chain is Hemagglutinin-esterase-fusion glycoprotein (HE), found in Influenza C virus (strain C/Nara/1982).